Reading from the N-terminus, the 28-residue chain is Cysteine-rich venom protein asurin-2 (28 aa).

Residues 1–15 are compositionally biased toward basic and acidic residues; it reads SNKKDYRKEIVDKHN. Residues 1–28 are disordered; sequence SNKKDYRKEIVDKHNALSRSVKPTASNM. Residues 17 to 28 show a composition bias toward polar residues; that stretch reads LSRSVKPTASNM.

It belongs to the CRISP family. In terms of processing, contains 8 disulfide bonds. Expressed by the venom gland.

It localises to the secreted. Blocks contraction of smooth muscle elicited by high potassium-induced depolarization, but does not block caffeine-stimulated contraction. May target voltage-gated calcium channels on smooth muscle. This Austrelaps superbus (Lowland copperhead snake) protein is Cysteine-rich venom protein asurin-2.